Reading from the N-terminus, the 190-residue chain is Large ribosomal subunit protein uL10 (190 aa).

A disordered region spans residues 170-190; that stretch reads AAGAPAEAAPVEAPAAETVDA.

Belongs to the universal ribosomal protein uL10 family. Part of the ribosomal stalk of the 50S ribosomal subunit. The N-terminus interacts with L11 and the large rRNA to form the base of the stalk. The C-terminus forms an elongated spine to which L12 dimers bind in a sequential fashion forming a multimeric L10(L12)X complex.

Functionally, forms part of the ribosomal stalk, playing a central role in the interaction of the ribosome with GTP-bound translation factors. The protein is Large ribosomal subunit protein uL10 of Kineococcus radiotolerans (strain ATCC BAA-149 / DSM 14245 / SRS30216).